We begin with the raw amino-acid sequence, 474 residues long: Chromosomal replication initiator protein DnaA (474 aa).

The domain I, interacts with DnaA modulators stretch occupies residues 1 to 73 (MTNIEQERWS…LSCWQAEMPE (73 aa)). Residues 73–130 (EVHRIDLTVRTAMRCAAPAKEQAAPIEPRREDNRAAAHDLRVSATAPVSANHEALGGS) form a domain II region. Residues 131–353 (PLDPRLTFSS…GAINRLLAHS (223 aa)) form a domain III, AAA+ region region. Positions 178, 180, 181, and 182 each coordinate ATP. The segment at 354 to 474 (KLNAQPVTLE…VESLKRQLQE (121 aa)) is domain IV, binds dsDNA.

The protein belongs to the DnaA family. In terms of assembly, oligomerizes as a right-handed, spiral filament on DNA at oriC.

Its subcellular location is the cytoplasm. Plays an essential role in the initiation and regulation of chromosomal replication. ATP-DnaA binds to the origin of replication (oriC) to initiate formation of the DNA replication initiation complex once per cell cycle. Binds the DnaA box (a 9 base pair repeat at the origin) and separates the double-stranded (ds)DNA. Forms a right-handed helical filament on oriC DNA; dsDNA binds to the exterior of the filament while single-stranded (ss)DNA is stabiized in the filament's interior. The ATP-DnaA-oriC complex binds and stabilizes one strand of the AT-rich DNA unwinding element (DUE), permitting loading of DNA polymerase. After initiation quickly degrades to an ADP-DnaA complex that is not apt for DNA replication. Binds acidic phospholipids. In Rhodopseudomonas palustris (strain BisA53), this protein is Chromosomal replication initiator protein DnaA.